A 589-amino-acid chain; its full sequence is Chromodomain Y-like protein (589 aa).

Positions 1-10 are enriched in polar residues; that stretch reads MGLGSSQPST. The tract at residues 1–57 is disordered; it reads MGLGSSQPSTKEAEPCTLQEKEEHPVDDTRQQNNAVPATVSDPDQVSPAVQDAETQV. Basic and acidic residues predominate over residues 11–30; sequence KEAEPCTLQEKEEHPVDDTR. The Chromo domain maps to 55–115; the sequence is TQVESIVDKR…RHNERQKEGT (61 aa). Residues 55 to 300 form an interaction with EZH2 region; sequence TQVESIVDKR…TIQTSVTGVT (246 aa). The residue at position 82 (Ser82) is a Phosphoserine. The interval 110–155 is disordered; that stretch reads RQKEGTLARANRASPSNARKQISRSTHSALSKTNPKALVVGKDHES. Low complexity predominate over residues 117 to 128; it reads ARANRASPSNAR. Lys129 carries the post-translational modification N6,N6,N6-trimethyllysine; by EHMT2; alternate. Residue Lys129 is modified to N6,N6-dimethyllysine; by EHMT2; alternate. Lys129 is subject to N6-methyllysine; by EHMT2; alternate. Positions 132-143 are enriched in polar residues; it reads SRSTHSALSKTN. Phosphoserine is present on residues Ser164, Ser195, and Ser210. Positions 202–224 are disordered; sequence SIDGFHGESPEKLDQGAEDTVTP. The span at 206 to 216 shows a compositional bias: basic and acidic residues; it reads FHGESPEKLDQ. The interval 353–585 is acetyl-CoA-binding domain; the sequence is SENNSLNPEV…DSMLKYLQRK (233 aa).

Forms multimers and multimerization is required for stable binding to chromatin. Interacts with HDAC1 and HDAC2 via its C-terminal acetyl-CoA-binding domain. Interacts with EZH2, EED, SUZ12, REST, EHMT1 and EHMT2. Part of a complex containing at least CDYL, REST, WIZ, SETB1, EHMT1 and EHMT2. Part of a complex containing at least CDYL, MIER1, MIER2, HDAC1 and HDAC2. Interacts with CHAF1A and CHAF1B; bridging the CAF-1 complex to the MCM2-7 (MCM) complex. Interacts with MCM3 and MCM5; bridging the CAF-1 complex to the MCM2-7 (MCM) complex. Recruited to Xist RNA-coated X chromosome. Interacts with EHMT2 and PRDM9; interaction only takes place when PRDM9 is bound to hotspot DNA. As to expression, expressed in the brain, with expression in the hippocampal dentate gyrus, CA1, striatum and cortex (at protein level). Expressed in the prelimbic cortex.

The protein localises to the nucleus. It localises to the chromosome. It carries out the reaction 3-hydroxybutanoyl-CoA = (2E)-butenoyl-CoA + H2O. Chromatin reader protein that recognizes and binds histone H3 trimethylated at 'Lys-9', dimethylated at 'Lys-27' and trimethylated at 'Lys-27' (H3K9me3, H3K27me2 and H3K27me3, respectively). Part of multimeric repressive chromatin complexes, where it is required for transmission and restoration of repressive histone marks, thereby preserving the epigenetic landscape. Required for chromatin targeting and maximal enzymatic activity of Polycomb repressive complex 2 (PRC2); acts as a positive regulator of PRC2 activity by bridging the pre-existing histone H3K27me3 and newly recruited PRC2 on neighboring nucleosomes. Acts as a corepressor for REST by facilitating histone-lysine N-methyltransferase EHMT2 recruitment and H3K9 dimethylation at REST target genes for repression. Involved in X chromosome inactivation in females: recruited to Xist RNA-coated X chromosome and facilitates propagation of H3K9me2 by anchoring EHMT2. Promotes EZH2 accumulation and H3K27me3 methylation at DNA double strand breaks (DSBs), thereby facilitating transcriptional repression at sites of DNA damage and homology-directed repair of DSBs. Required for neuronal migration during brain development by repressing expression of RHOA. By repressing the expression of SCN8A, contributes to the inhibition of intrinsic neuronal excitability and epileptogenesis. In addition to acting as a chromatin reader, acts as a hydro-lyase. Shows crotonyl-coA hydratase activity by mediating the conversion of crotonyl-CoA ((2E)-butenoyl-CoA) to beta-hydroxybutyryl-CoA (3-hydroxybutanoyl-CoA), thereby acting as a negative regulator of histone crotonylation. Histone crotonylation is required during spermatogenesis; down-regulation of histone crotonylation by CDYL regulates the reactivation of sex chromosome-linked genes in round spermatids and histone replacement in elongating spermatids. By regulating histone crotonylation and trimethylation of H3K27, may be involved in stress-induced depression-like behaviors, possibly by regulating VGF expression. Displays acetyltransferase activity toward tubulin in vitro; such activity is however unsure in vivo and additional evidences would be required to confirm this result. Functionally, not able to recognize and bind histone H3K9me3, histone H3K27me2 and histone H3K27me3, due to the presence of a N-terminal extension that inactivates the chromo domain. This is Chromodomain Y-like protein from Rattus norvegicus (Rat).